Consider the following 504-residue polypeptide: UDP-GalNAc:beta-1,3-N-acetylgalactosaminyltransferase 2 (504 aa).

At Met-1–Asn-3 the chain is on the cytoplasmic side. A helical; Signal-anchor for type II membrane protein membrane pass occupies residues Trp-4–Leu-24. Residues Arg-25 to Arg-504 lie on the Lumenal side of the membrane. N-linked (GlcNAc...) asparagine glycosylation is found at Asn-117 and Asn-176.

This sequence belongs to the glycosyltransferase 31 family. In terms of processing, N-glycosylated. Present in testis (at protein level). In testis, it is mainly detected in the middle layers of seminiferous tubules at stages XII to II. Strongly expressed in primary and secondary spermatocytes and early round spermatids, but not in spermatogonia, elongating or elongated spermatids, or in Leydig or Sertoli cells.

The protein localises to the golgi apparatus membrane. It localises to the endoplasmic reticulum. The enzyme catalyses 3-O-(N-acetyl-beta-D-glucosaminyl-(1-&gt;4)-alpha-D-mannosyl)-L-threonyl-[protein] + UDP-N-acetyl-alpha-D-galactosamine = 3-O-[beta-D-GalNAc-(1-&gt;3)-beta-D-GlcNAc-(1-&gt;4)-alpha-D-Man]-L-Thr-[protein] + UDP + H(+). It functions in the pathway protein modification; protein glycosylation. Its function is as follows. Beta-1,3-N-acetylgalactosaminyltransferase that synthesizes a unique carbohydrate structure, GalNAc-beta-1-3GlcNAc, on N- and O-glycans. Has no galactose nor galactosaminyl transferase activity toward any acceptor substrate. Involved in alpha-dystroglycan (DAG1) glycosylation: acts coordinately with GTDC2/POMGnT2 to synthesize a GalNAc-beta3-GlcNAc-beta-terminus at the 4-position of protein O-mannose in the biosynthesis of the phosphorylated O-mannosyl trisaccharide (N-acetylgalactosamine-beta-3-N-acetylglucosamine-beta-4-(phosphate-6-)mannose), a carbohydrate structure present in alpha-dystroglycan, which is required for binding laminin G-like domain-containing extracellular proteins with high affinity. This is UDP-GalNAc:beta-1,3-N-acetylgalactosaminyltransferase 2 (B3galnt2) from Mus musculus (Mouse).